Consider the following 404-residue polypeptide: Glucose-1-phosphate adenylyltransferase (404 aa).

Alpha-D-glucose 1-phosphate is bound by residues Y99, G164, 179-180 (EK), and S197.

The protein belongs to the bacterial/plant glucose-1-phosphate adenylyltransferase family.

The catalysed reaction is alpha-D-glucose 1-phosphate + ATP + H(+) = ADP-alpha-D-glucose + diphosphate. It participates in capsule biogenesis; capsule polysaccharide biosynthesis. It functions in the pathway glycan biosynthesis; glycogen biosynthesis. Functionally, involved in the biosynthesis of ADP-glucose, a building block, required in the biosynthesis of maltose-1-phosphate (M1P) and in the elongation reactions to produce linear alpha-1,4-glucans. Catalyzes the reaction between ATP and alpha-D-glucose 1-phosphate (G1P) to produce pyrophosphate and ADP-Glc. The sequence is that of Glucose-1-phosphate adenylyltransferase from Mycolicibacterium paratuberculosis (strain ATCC BAA-968 / K-10) (Mycobacterium paratuberculosis).